A 515-amino-acid polypeptide reads, in one-letter code: Tetratricopeptide repeat protein 8 (515 aa).

A TPR 1 repeat occupies 4-37 (EMEPLLRAWSYFRRRKFQLCADLCTQMLEKSPYD). 2 disordered regions span residues 89 to 109 (RPGTSLKLPGTNQTGGPTQAV) and 118 to 137 (PITGFLRPSTQSGRPGTMEQ). TPR repeat units follow at residues 225–258 (WWWKVQIGKCYYRLGMYREAEKQFKSALKQQEMV), 259–291 (DTFLYLAKVYIILDQPVTALNLFKQGLDKFPGE), 292–325 (VTLLCGIARIYEEMNNSSSAAEYYKEVLKQDNTH), 326–359 (VEAIACIGSNHFYSDQPEVALRFYRRLLQMGVYN), 360–393 (CQLFNNLGLCCFYAQQYDMTLTSFERALSLAENE), 397–430 (ADVWYNLGHIAVGIGDTNLAHQCFRLALVHNNHH), and 432–464 (EAYNNLAVLEMRKGHVEQARALLQTASSLAPHM).

In terms of assembly, part of BBSome complex, that contains BBS1, BBS2, BBS4, BBS5, BBS7, BBS8/TTC8, BBS9 and BBIP10. Interacts with PCM1. Interacts with CCDC28B. Interacts with PKD1. In terms of tissue distribution, isoform 1 is retina-specific whereas isoform 2 is ubiquitously expressed.

The protein resides in the cytoplasm. It localises to the cytoskeleton. Its subcellular location is the microtubule organizing center. It is found in the centrosome. The protein localises to the centriole. The protein resides in the cell projection. It localises to the cilium membrane. Its subcellular location is the centriolar satellite. It is found in the cilium. Functionally, the BBSome complex is thought to function as a coat complex required for sorting of specific membrane proteins to the primary cilia. The BBSome complex is required for ciliogenesis but is dispensable for centriolar satellite function. This ciliogenic function is mediated in part by the Rab8 GDP/GTP exchange factor, which localizes to the basal body and contacts the BBSome. Rab8(GTP) enters the primary cilium and promotes extension of the ciliary membrane. Firstly the BBSome associates with the ciliary membrane and binds to RAB3IP/Rabin8, the guanosyl exchange factor (GEF) for Rab8 and then the Rab8-GTP localizes to the cilium and promotes docking and fusion of carrier vesicles to the base of the ciliary membrane. The BBSome complex, together with the LTZL1, controls SMO ciliary trafficking and contributes to the sonic hedgehog (SHH) pathway regulation. Required for proper BBSome complex assembly and its ciliary localization. The sequence is that of Tetratricopeptide repeat protein 8 (Ttc8) from Mus musculus (Mouse).